A 976-amino-acid chain; its full sequence is MKLKSVFRSVLKYRKTNLSLLLLITYSIITLLYIFDHERYKLNLPKEDEHPEFNDLLETAWGDLQIITASFHPYTSKENDKVHDYLLKRVLEITGNSSFASVSDDKESERSILFQQQDPFNESSRFSRVTYFESSNILVKLEGKNPEEEGLLLSAHFDSVPTGYGATDDGMGVVSLLANLKYHIKHRPNRTLIFNFNNNEEFGLLGASTYFDHSWSNLTKYVINLEGTGAGGKAVLFRTSDTSTARIYQQSVKENPFGNSIYQQGFYSRYVRSETDYKIYEENGMRGWDVAFYKPRNLYHTIKDSIQYTSKASLWHMLHTSLQLSAYVASNSLDTADQTPACYFDFIGLKFFVISAKTLFYWNCIFLLVSPVVAIGLYLISRDRMTWKSYSWLSWTRFPLSLAAGIIVQKLFSNDIIRSNPLTFSRNYFWPISAFFTQVIFTSYVLINCSNFFFPCADMKSLSIIELFIILWTILLFTSKLLYSSDYRYTGLYPLSIFFLLSTIAAILRLLALALGMRTRKRLGRECRDHHSNYSSHSQIDMERDGQENLEQPQDQLTSSQDDQASIQDDNVSTTSAGPSHNVDEDHGMDSSSQQHDERVPLLKGSNSMEEGLSTRENSLKLEYTDYAWIIQFLLIVPIPSFILFNSVDVIMDALNHTVQEGSKATFDVLRFGMVGSILIALPILPFFYKVNYITISLTALLFLISASKTLLVHPFTNSNPLKVRFSQNIDLSQGNAASVHVLGREGNFLKPMLQDLPSIKYSSTHINCTSVTNGMELCMYDGMQPNLLSTNGNTNISSMVKVHVLHNNRNSTERSPYEPIVAELLLEVKENRACTLTFESRHQAKSPVREITVYQKKNSAPQKANITKTIKSASGINELQLHKLDFDQETYHIGVQWFPKLLTDGNVEDDKLGTKDELSVSISCYWGEYDSESVVNGTAVRKIPAFDELINYAPLSFSFTNEQKGLVIVKDAIIL.

The Cytoplasmic portion of the chain corresponds to 1–15 (MKLKSVFRSVLKYRK). The helical transmembrane segment at 16 to 36 (TNLSLLLLITYSIITLLYIFD) threads the bilayer. Over 37–359 (HERYKLNLPK…KFFVISAKTL (323 aa)) the chain is Vacuolar. Asparagine 96 and asparagine 121 each carry an N-linked (GlcNAc...) asparagine glycan. Zn(2+)-binding residues include histidine 156 and aspartate 168. Asparagine 189 carries N-linked (GlcNAc...) asparagine glycosylation. Glutamate 200 serves as the catalytic Proton acceptor. Glutamate 201 lines the Zn(2+) pocket. A glycan (N-linked (GlcNAc...) asparagine) is linked at asparagine 217. The Zn(2+) site is built by glutamate 226 and histidine 300. Residues 360-380 (FYWNCIFLLVSPVVAIGLYLI) traverse the membrane as a helical segment. Topologically, residues 381-392 (SRDRMTWKSYSW) are cytoplasmic. The chain crosses the membrane as a helical span at residues 393 to 412 (LSWTRFPLSLAAGIIVQKLF). Topologically, residues 413 to 428 (SNDIIRSNPLTFSRNY) are vacuolar. The chain crosses the membrane as a helical span at residues 429–449 (FWPISAFFTQVIFTSYVLINC). The Cytoplasmic portion of the chain corresponds to 450-461 (SNFFFPCADMKS). The helical transmembrane segment at 462–482 (LSIIELFIILWTILLFTSKLL) threads the bilayer. Over 483–496 (YSSDYRYTGLYPLS) the chain is Vacuolar. The helical transmembrane segment at 497-517 (IFFLLSTIAAILRLLALALGM) threads the bilayer. The Cytoplasmic portion of the chain corresponds to 518-627 (RTRKRLGREC…NSLKLEYTDY (110 aa)). The disordered stretch occupies residues 528-610 (RDHHSNYSSH…PLLKGSNSME (83 aa)). The span at 549-558 (NLEQPQDQLT) shows a compositional bias: polar residues. The span at 559 to 570 (SSQDDQASIQDD) shows a compositional bias: low complexity. The segment covering 582–601 (NVDEDHGMDSSSQQHDERVP) has biased composition (basic and acidic residues). A helical transmembrane segment spans residues 628–648 (AWIIQFLLIVPIPSFILFNSV). The Vacuolar segment spans residues 649–668 (DVIMDALNHTVQEGSKATFD). Residue asparagine 656 is glycosylated (N-linked (GlcNAc...) asparagine). A helical membrane pass occupies residues 669–689 (VLRFGMVGSILIALPILPFFY). Topologically, residues 690 to 692 (KVN) are cytoplasmic. The chain crosses the membrane as a helical span at residues 693–713 (YITISLTALLFLISASKTLLV). Topologically, residues 714 to 976 (HPFTNSNPLK…LVIVKDAIIL (263 aa)) are vacuolar. Residues asparagine 768, asparagine 796, asparagine 811, asparagine 866, and asparagine 937 are each glycosylated (N-linked (GlcNAc...) asparagine).

Belongs to the peptidase M28 family. The cofactor is Zn(2+). N-glycosylated.

It is found in the vacuole membrane. Functionally, may be involved in vacuolar sorting and osmoregulation. The sequence is that of Vacuolar membrane protease from Saccharomyces cerevisiae (strain ATCC 204508 / S288c) (Baker's yeast).